A 328-amino-acid chain; its full sequence is L-asparaginase (328 aa).

Residues 1–320 (MKLLVLGTGG…EEIRKIMERN (320 aa)) enclose the Asparaginase/glutaminase domain. The active-site Nucleophile; O-isoaspartyl threonine intermediate is the T11. L-aspartate contacts are provided by T11, D53, S54, T85, and D86. Catalysis depends on charge relay system residues T85, D86, K156, and Y274.

It belongs to the asparaginase 1 family. In terms of assembly, homodimer.

The enzyme catalyses L-asparagine + H2O = L-aspartate + NH4(+). Chohan et al. found that divalent metal ions and EDTA do not have any significant effect on enzyme activity, indicating that activity is independent of metal ions. In another study, Hong et al. showed that activity is enhanced by Mg(2+), significantly inhibited by Co(2+) and Ni(2+), and moderately inhibited by Ca(2+), Cu(2+) and EDTA. Unfolding studies suggest that urea cannot induce complete unfolding and inactivation of the enzyme even at a concentration 8 M. However, in the presence of 4 M guanidine hydrochloride, the enzyme structure is unfolded with complete loss of enzyme activity. Catalyzes the hydrolysis of L-asparagine into L-aspartate and ammonia. Also displays D-asparaginase activity, which is about 50% of the L-asparaginase activity. Does not exhibit glutaminase activity. The polypeptide is L-asparaginase (Thermococcus kodakarensis (strain ATCC BAA-918 / JCM 12380 / KOD1) (Pyrococcus kodakaraensis (strain KOD1))).